The sequence spans 142 residues: Large ribosomal subunit protein bL17 (142 aa).

It belongs to the bacterial ribosomal protein bL17 family. As to quaternary structure, part of the 50S ribosomal subunit. Contacts protein L32.

The protein is Large ribosomal subunit protein bL17 of Brucella canis (strain ATCC 23365 / NCTC 10854 / RM-666).